Reading from the N-terminus, the 160-residue chain is Transcription elongation factor GreA (160 aa).

Residues 10–37 (TLDGKAKLENELQELKTVKRKEVVERIK) are a coiled coil.

The protein belongs to the GreA/GreB family.

In terms of biological role, necessary for efficient RNA polymerase transcription elongation past template-encoded arresting sites. The arresting sites in DNA have the property of trapping a certain fraction of elongating RNA polymerases that pass through, resulting in locked ternary complexes. Cleavage of the nascent transcript by cleavage factors such as GreA or GreB allows the resumption of elongation from the new 3'terminus. GreA releases sequences of 2 to 3 nucleotides. The sequence is that of Transcription elongation factor GreA from Listeria innocua serovar 6a (strain ATCC BAA-680 / CLIP 11262).